An 825-amino-acid polypeptide reads, in one-letter code: Glycerol-3-phosphate acyltransferase (825 aa).

The HXXXXD motif motif lies at 306-311 (CHRSHM). A disordered region spans residues 802–825 (SASSSTEMEASTSSSQTAEETTQG).

Belongs to the GPAT/DAPAT family.

It localises to the cell inner membrane. The enzyme catalyses sn-glycerol 3-phosphate + an acyl-CoA = a 1-acyl-sn-glycero-3-phosphate + CoA. The protein operates within phospholipid metabolism; CDP-diacylglycerol biosynthesis; CDP-diacylglycerol from sn-glycerol 3-phosphate: step 1/3. The protein is Glycerol-3-phosphate acyltransferase of Pectobacterium atrosepticum (strain SCRI 1043 / ATCC BAA-672) (Erwinia carotovora subsp. atroseptica).